The primary structure comprises 267 residues: Putative carbamate hydrolase RutD (267 aa).

Positions 14-115 (PTLVLSAGLG…EKLVVVNGWP (102 aa)) constitute an AB hydrolase-1 domain.

Belongs to the AB hydrolase superfamily. Hydrolase RutD family.

It catalyses the reaction carbamate + 2 H(+) = NH4(+) + CO2. In terms of biological role, involved in pyrimidine catabolism. May facilitate the hydrolysis of carbamate, a reaction that can also occur spontaneously. In Serratia proteamaculans (strain 568), this protein is Putative carbamate hydrolase RutD.